Here is a 135-residue protein sequence, read N- to C-terminus: MGLITKIARGLVRGADRMAECTSKLGPNSYNKGRGAKKIGYLTSSGKFVKVREMVPVFVVPDLTGFKLKPYVSYKAPPGTEDPMTAKKLFMETVGPQIEKDLQESTFRPEDLEKYGFEPTQEGKLFKLFPRNYIQ.

The N-terminal 13 residues, 1-13, are a transit peptide targeting the mitochondrion; it reads MGLITKIARGLVR.

This sequence belongs to the mitochondrion-specific ribosomal protein mL41 family. Component of the mitochondrial ribosome large subunit (39S) which comprises a 16S rRNA and about 50 distinct proteins.

Its subcellular location is the mitochondrion. Component of the mitochondrial ribosome large subunit. Also involved in apoptosis and cell cycle. This is Large ribosomal subunit protein mL41B (mrpl41-b) from Xenopus laevis (African clawed frog).